Reading from the N-terminus, the 306-residue chain is MSNKFINFEKISRESWKTLHQKAKALLTQEELKSITSLNDNISINDVIDIYLPLINLIQVYKIAQENLSFSKSLFLKKDIQLRPFIIGISGSVAVGKSTTSRLLQLLLSRTHPNSQVELVTTDGFLYPNQFLIEQGLLNRKGFPESYNMELLLDFLDSIKNGQTAFAPVYSHDIYDIIPNQKQSFNNPDFLIVEGINVFQNQQNNRLYMSDYFDFSIYIDADSSHIETWYIERFLSILKLAKRDPHNYYAQYAQLPRSEAIAFARNVWKTVNLENLEKFIEPTRNRAELILHKSADHKIDEIYLKK.

91–98 (GSVAVGKS) is an ATP binding site.

The protein belongs to the prokaryotic pantothenate kinase family.

It is found in the cytoplasm. It carries out the reaction (R)-pantothenate + ATP = (R)-4'-phosphopantothenate + ADP + H(+). Its pathway is cofactor biosynthesis; coenzyme A biosynthesis; CoA from (R)-pantothenate: step 1/5. The protein is Pantothenate kinase (coaA) of Streptococcus pyogenes serotype M3 (strain ATCC BAA-595 / MGAS315).